The chain runs to 61 residues: MSIFRSLTSLSNFNVNKNYNNNNNNNNINNIASTKISQESNQTSYLIFAPLKRSFTYSCYI.

This is an uncharacterized protein from Dictyostelium discoideum (Social amoeba).